Reading from the N-terminus, the 317-residue chain is Olfactory receptor 5K17 (317 aa).

The Extracellular portion of the chain corresponds to 1–28; the sequence is MMKANHSLTVEFILIGFSDHTDLKTLLF. An N-linked (GlcNAc...) asparagine glycan is attached at N5. A helical transmembrane segment spans residues 29–49; sequence LLFSAIYLVTIVGNLGLVALI. The Cytoplasmic portion of the chain corresponds to 50 to 56; the sequence is YMEPRLH. A helical membrane pass occupies residues 57 to 77; the sequence is TPMYIFLGNLALMDSCCSCAI. Topologically, residues 78-93 are extracellular; it reads TPKMLENFFSVDRRIS. The chain crosses the membrane as a helical span at residues 94–114; sequence LYECMVQFYFLCLAETADCFL. C97 and C189 are joined by a disulfide. The Cytoplasmic segment spans residues 115–144; the sequence is LAAMAYDRYVAICNPLQYHTMMSKKLSIQM. A helical transmembrane segment spans residues 145–165; sequence SIGTFIASNLHSLIHTGCLLR. At 166-198 the chain is on the extracellular side; it reads LNFCKSRRIDHFFCDILPLYKLSCTDPFINELM. The chain crosses the membrane as a helical span at residues 199–219; it reads LYIFSMPIQVFTITTVLVSYS. At 220 to 239 the chain is on the cytoplasmic side; that stretch reads CILLTVFKMKSKDGRGKAFS. A helical transmembrane segment spans residues 240–259; sequence TCASHFFSVSIFYICLLMYI. At 260 to 268 the chain is on the extracellular side; the sequence is GPSKNSNKD. The chain crosses the membrane as a helical span at residues 269-289; sequence IPVGVFYTIVIPLLNPFIYSL. Over 290 to 317 the chain is Cytoplasmic; sequence RNKEVVNAVKKVMKTHSIFKNSSASIAH.

Belongs to the G-protein coupled receptor 1 family.

It localises to the cell membrane. Functionally, potential odorant receptor. The polypeptide is Olfactory receptor 5K17 (Mus musculus (Mouse)).